A 93-amino-acid polypeptide reads, in one-letter code: Bombyxin-related peptide B (93 aa).

Residues 1–21 (MKFVLVLVSLALLVSLASVQG) form the signal peptide. 3 disulfides stabilise this stretch: cysteine 25/cysteine 80, cysteine 37/cysteine 93, and cysteine 79/cysteine 84. Positions 47–71 (SGAMGAAAMYGTRGWRWAAMGGNRG) are cleaved as a propeptide — c peptide like.

This sequence belongs to the insulin family. In terms of assembly, heterodimer of a B chain and an A chain linked by two disulfide bonds. In terms of tissue distribution, located in 4 pairs of medial neurosecretory cells in the brain.

The protein localises to the secreted. The sequence is that of Bombyxin-related peptide B from Agrius convolvuli (Convolvulus hawk-moth).